A 418-amino-acid polypeptide reads, in one-letter code: MTRLVTLELLMAGIGSALLCFPDCILGEDTLFHEDQDKGTQLDSLTLASINTDFAFSLYKKLALRNPDKNVVFSPLSISAALAVVSLGAKGNSMEEILEGLKFNLTETPETEIHRGFGHLLQRLSQPRDEIQISTGNALFIEKRLQVLAEFQEKAKALYQAEAFTADFQQSREAKKLINDYVSKQTQGKIQGLITNLAKKTSMVLVNYIYFKGKWKVPFDPRDTFQSEFYSGKRRPVKVPMMKLEDLTTPYVRDEELNCTVVELKYTGNASALFILPDQGKMQQVEASLQPETLRRWKDSLRPSMIDELYLPKFSISADYNLEDVLPELGIKEVFSTQADLSGITGDKDLMVSQVVHKAVLDVAETGTEAAAATGVKFVPMSAKLDPLIIAFDRPFLMIISDTETAIAPFLAKIFNPK.

The signal sequence occupies residues methionine 1–aspartate 29. At serine 93 the chain carries Phosphoserine. Residues asparagine 104, asparagine 258, and asparagine 269 are each glycosylated (N-linked (GlcNAc...) asparagine). An RCL region spans residues glycine 367–arginine 394.

It belongs to the serpin family. In terms of processing, N-glycosylated. As to expression, liver.

The protein localises to the secreted. This chain is Serine protease inhibitor A3N (Serpina3n), found in Rattus norvegicus (Rat).